Consider the following 202-residue polypeptide: Virulence protein F (202 aa).

Over residues 1–15 (MRNSSLRDASGSNDA) the composition is skewed to polar residues. Positions 1-21 (MRNSSLRDASGSNDAQVPHKT) are disordered. An F-box domain is found at 20-42 (KTELLNLPDHVLTEVAKRLATNN).

As to quaternary structure, component of SCF(virF) E3 ubiquitin ligase complexes. Interacts with host VIP1 and SKP1A. Interacts with Arabidopsis thaliana ENAP1/VFP3 and VFP5 in the host cell nucleus.

Its subcellular location is the host nucleus. Functionally, in the host plant, component of SCF(virF) E3 ubiquitin ligase complexes, which mediate the ubiquitination and subsequent proteasomal degradation of target proteins such as the host VIP1, after its implication in T-DNA translocation to the host nucleus. Required for the formation of tumors of a wild-type size on certain plant species only. In Agrobacterium tumefaciens (strain 15955), this protein is Virulence protein F.